The chain runs to 340 residues: MTKPIILTGDRPTGKLHLGHYVGSLKNRVFLQNENKYKMFVFLADQQALTDHAKESELIQESIGNVALDYLSVGLDPKQSTIFIQSQIPELAELSMYYMNLVSLARLERNPTVKTEIAQKGFGESIPSGFLVYPVSQAADITAFKANLVPVGNDQKPMIEQTREIVRSFNHTYHTDCLVEPEGIYPENEKAGRLPGLDGNAKMSKSLGNGIYLSDDADTVRKKVMSMYTDPNHIKIEDPGQIEGNMVFHYLDIFARKEDQADIEAMKEHYQIGGLGDVKTKRYLLDILERELAPIRERRLEYAKDMGEVFRMLQEGSQKARTVAAKTLSEVKSAMGINYF.

ATP-binding positions include 11 to 13 (RPT) and 19 to 20 (GH). The 'HIGH' region signature appears at 12 to 20 (PTGKLHLGH). Aspartate 140 provides a ligand contact to L-tryptophan. ATP is bound by residues 152–154 (GND), leucine 194, and 202–206 (KMSKS). Positions 202–206 (KMSKS) match the 'KMSKS' region motif.

The protein belongs to the class-I aminoacyl-tRNA synthetase family. As to quaternary structure, homodimer.

It is found in the cytoplasm. The enzyme catalyses tRNA(Trp) + L-tryptophan + ATP = L-tryptophyl-tRNA(Trp) + AMP + diphosphate + H(+). Functionally, catalyzes the attachment of tryptophan to tRNA(Trp). In Streptococcus pyogenes serotype M1, this protein is Tryptophan--tRNA ligase.